Here is a 277-residue protein sequence, read N- to C-terminus: Histone-lysine N-methyltransferase set-17 (277 aa).

Positions 135–246 (FRIEESKLPN…INQELLVWYG (112 aa)) constitute an SET domain. Tyr-245 provides a ligand contact to S-adenosyl-L-methionine.

The protein belongs to the class V-like SAM-binding methyltransferase superfamily. In terms of tissue distribution, expressed in the germline. Predominantly expressed in primary spermatocytes. Also expressed in the oocyte-producing germline of hermaphrodites.

Its subcellular location is the nucleus. The enzyme catalyses N(6)-methyl-L-lysyl(4)-[histone H3] + S-adenosyl-L-methionine = N(6),N(6)-dimethyl-L-lysyl(4)-[histone H3] + S-adenosyl-L-homocysteine + H(+). It catalyses the reaction L-lysyl(4)-[histone H3] + S-adenosyl-L-methionine = N(6)-methyl-L-lysyl(4)-[histone H3] + S-adenosyl-L-homocysteine + H(+). Functionally, histone methyltransferase that specifically mono- and di-methylates 'Lys-4' of histone H3 in vitro. Does not tri-methylate 'Lys-4' of histone H3 in vitro. Promotes spermatid development and fertility by positively regulating the transcription of spermatocyte-specific genes in primary spermatocytes. Together with spr-5, required for transgenerational fertility. This Caenorhabditis elegans protein is Histone-lysine N-methyltransferase set-17.